We begin with the raw amino-acid sequence, 292 residues long: 4-hydroxy-tetrahydrodipicolinate synthase (292 aa).

Thr45 contacts pyruvate. Tyr133 acts as the Proton donor/acceptor in catalysis. Residue Lys161 is the Schiff-base intermediate with substrate of the active site. Ile203 is a pyruvate binding site.

This sequence belongs to the DapA family. As to quaternary structure, homotetramer; dimer of dimers.

It localises to the cytoplasm. It catalyses the reaction L-aspartate 4-semialdehyde + pyruvate = (2S,4S)-4-hydroxy-2,3,4,5-tetrahydrodipicolinate + H2O + H(+). It functions in the pathway amino-acid biosynthesis; L-lysine biosynthesis via DAP pathway; (S)-tetrahydrodipicolinate from L-aspartate: step 3/4. Its function is as follows. Catalyzes the condensation of (S)-aspartate-beta-semialdehyde [(S)-ASA] and pyruvate to 4-hydroxy-tetrahydrodipicolinate (HTPA). The chain is 4-hydroxy-tetrahydrodipicolinate synthase from Nitrosococcus oceani (strain ATCC 19707 / BCRC 17464 / JCM 30415 / NCIMB 11848 / C-107).